The primary structure comprises 96 residues: Small cysteine and glycine repeat-containing protein 7 (96 aa).

The 14 X 2 AA repeats of CG stretch occupies residues 4–80; it reads CGCGSCGGCG…TCGSCGCGCG (77 aa).

It belongs to the KRTAP type 28 family.

In terms of biological role, in the hair cortex, hair keratin intermediate filaments are embedded in an interfilamentous matrix, consisting of hair keratin-associated proteins (KRTAP), which are essential for the formation of a rigid and resistant hair shaft through their extensive disulfide bond cross-linking with abundant cysteine residues of hair keratins. The matrix proteins include the high-sulfur and high-glycine-tyrosine keratins. This is Small cysteine and glycine repeat-containing protein 7 from Homo sapiens (Human).